Consider the following 626-residue polypeptide: Procollagen galactosyltransferase 2 (626 aa).

A signal peptide spans M1–A27. 4 N-linked (GlcNAc...) asparagine glycosylation sites follow: N97, N185, N382, and N580. The tract at residues N604 to L626 is disordered. The short motif at R623–L626 is the Prevents secretion from ER element.

This sequence belongs to the glycosyltransferase 25 family. In terms of tissue distribution, expressed in brain and skeletal muscle.

It is found in the endoplasmic reticulum lumen. The catalysed reaction is (5R)-5-hydroxy-L-lysyl-[collagen] + UDP-alpha-D-galactose = (5R)-5-O-(beta-D-galactosyl)-5-hydroxy-L-lysyl-[collagen] + UDP + H(+). Functionally, beta-galactosyltransferase that transfers beta-galactose to hydroxylysine residues of collagen. In Homo sapiens (Human), this protein is Procollagen galactosyltransferase 2 (COLGALT2).